Consider the following 402-residue polypeptide: Probable tRNA pseudouridine synthase tag-124 (402 aa).

The active-site Nucleophile is D85. Residues 383 to 402 (SKKEKMAEKKKNGEESSDKL) form a disordered region.

The protein belongs to the tRNA pseudouridine synthase TruA family.

It carries out the reaction a uridine in tRNA = a pseudouridine in tRNA. Functionally, formation of pseudouridine at position 38 and 39 in the anticodon stem and loop of transfer RNAs. The sequence is that of Probable tRNA pseudouridine synthase tag-124 (tag-124) from Caenorhabditis elegans.